Here is a 266-residue protein sequence, read N- to C-terminus: Small ribosomal subunit protein eS1 (266 aa).

The interval 237–266 (DGGSKTGEVGETGSKVDRPEGYEPPVQETV) is disordered.

The protein belongs to the eukaryotic ribosomal protein eS1 family. Component of the small ribosomal subunit. Mature ribosomes consist of a small (40S) and a large (60S) subunit. The 40S subunit contains about 33 different proteins and 1 molecule of RNA (18S). The 60S subunit contains about 49 different proteins and 3 molecules of RNA (28S, 5.8S and 5S).

The protein localises to the cytoplasm. This Lysiphlebus testaceipes (Greenbugs aphid parastoid) protein is Small ribosomal subunit protein eS1.